The primary structure comprises 842 residues: Serine/threonine-protein kinase CLA4 (842 aa).

Residues 12 to 34 (DNDFQNIGPAPRPPSSNSQGRTC) are disordered. 2 positions are modified to phosphoserine: Ser29 and Ser46. Residues 61 to 179 (SKKKSGWVSY…WLDAIFAKCP (119 aa)) enclose the PH domain. A CRIB domain is found at 184 to 197 (VSSPTNFTHKVHVG). The span at 247-274 (GNPTNTLDKPQSGETSSSQKSLPNSYND) shows a compositional bias: polar residues. The segment at 247–524 (GNPTNTLDKP…KPKKPARPTM (278 aa)) is disordered. Residues 279 to 296 (NNSVNSKSSSGVSSSMVS) are compositionally biased toward low complexity. Positions 297 to 307 (QRKTSQPPNTK) are enriched in polar residues. The segment covering 308 to 319 (SPVSLGSGSLPP) has biased composition (low complexity). The span at 323–343 (KLPTSQSNIPRHLQNVPNQQY) shows a compositional bias: polar residues. 2 positions are modified to phosphoserine: Ser351 and Ser367. Low complexity predominate over residues 372–387 (QQQQQQQQQQKQQHQQ). The span at 396–408 (SPSPSPSPSPLNP) shows a compositional bias: pro residues. Low complexity predominate over residues 418 to 435 (PYSKQPQSPLSSQSTQNQ). Ser425 carries the post-translational modification Phosphoserine. Polar residues-rich tracts occupy residues 470 to 481 (PSNQNATSNTHV) and 488 to 497 (NDQSTPQTMR). One can recognise a Protein kinase domain in the interval 546-825 (FKVIEKAGQG…TEELLHHGFF (280 aa)). Residues 552–560 (AGQGASGSV) and Lys594 each bind ATP. The active-site Proton acceptor is the Asp693.

The protein belongs to the protein kinase superfamily. STE Ser/Thr protein kinase family. STE20 subfamily. In terms of assembly, interacts with CDC42.

It carries out the reaction L-seryl-[protein] + ATP = O-phospho-L-seryl-[protein] + ADP + H(+). The catalysed reaction is L-threonyl-[protein] + ATP = O-phospho-L-threonyl-[protein] + ADP + H(+). Involved in budding and cytokinesis. This Saccharomyces cerevisiae (strain ATCC 204508 / S288c) (Baker's yeast) protein is Serine/threonine-protein kinase CLA4 (CLA4).